The following is a 96-amino-acid chain: Progonadoliberin-1 (96 aa).

The first 26 residues, Met1–Cys26, serve as a signal peptide directing secretion. A Pyrrolidone carboxylic acid modification is found at Gln27. At Gly36 the chain carries Glycine amide.

This sequence belongs to the GnRH family. In terms of tissue distribution, preoptic area of the brain.

The protein localises to the secreted. Its function is as follows. Stimulates the secretion of gonadotropins. This chain is Progonadoliberin-1 (gnrh1), found in Verasper moseri (Barfin flounder).